Here is a 113-residue protein sequence, read N- to C-terminus: U11-theraphotoxin-Hhn1m (113 aa).

The signal sequence occupies residues 1 to 21 (MNTVRGTFLLVFGLAASLGQA). Positions 22 to 74 (DKNENRREMQKKTEQGKSYLNFAENLLLQKLEELEAKLLEKHSKKSKNSRQKR) are excised as a propeptide. 3 disulfide bridges follow: cysteine 75/cysteine 90, cysteine 82/cysteine 95, and cysteine 89/cysteine 110.

The protein belongs to the neurotoxin 14 (magi-1) family. 01 (HNTX-16) subfamily. In terms of tissue distribution, expressed by the venom gland.

It is found in the secreted. Its function is as follows. Probable ion channel inhibitor. The sequence is that of U11-theraphotoxin-Hhn1m from Cyriopagopus hainanus (Chinese bird spider).